We begin with the raw amino-acid sequence, 628 residues long: Glutamine--fructose-6-phosphate aminotransferase [isomerizing] (628 aa).

Cys2 acts as the Nucleophile; for GATase activity in catalysis. One can recognise a Glutamine amidotransferase type-2 domain in the interval 2–229 (CGIVGYVGHR…QDQAVVLTAD (228 aa)). The disordered stretch occupies residues 61–94 (ETDSNDGDGLGGSTGLGHTRWATHGRPTDRNAHP). 2 SIS domains span residues 301-440 (SDQE…ARGT) and 473-618 (LAER…VDKP). Lys623 (for Fru-6P isomerization activity) is an active-site residue.

Homodimer.

The protein localises to the cytoplasm. The enzyme catalyses D-fructose 6-phosphate + L-glutamine = D-glucosamine 6-phosphate + L-glutamate. Functionally, catalyzes the first step in hexosamine metabolism, converting fructose-6P into glucosamine-6P using glutamine as a nitrogen source. In Mycolicibacterium smegmatis (strain ATCC 700084 / mc(2)155) (Mycobacterium smegmatis), this protein is Glutamine--fructose-6-phosphate aminotransferase [isomerizing].